We begin with the raw amino-acid sequence, 230 residues long: Putative N-acetylmannosamine-6-phosphate 2-epimerase (230 aa).

Belongs to the NanE family.

It carries out the reaction an N-acyl-D-glucosamine 6-phosphate = an N-acyl-D-mannosamine 6-phosphate. Its pathway is amino-sugar metabolism; N-acetylneuraminate degradation; D-fructose 6-phosphate from N-acetylneuraminate: step 3/5. Converts N-acetylmannosamine-6-phosphate (ManNAc-6-P) to N-acetylglucosamine-6-phosphate (GlcNAc-6-P). The sequence is that of Putative N-acetylmannosamine-6-phosphate 2-epimerase from Malacoplasma penetrans (strain HF-2) (Mycoplasma penetrans).